A 151-amino-acid chain; its full sequence is Chaperonin GroEL (151 aa).

41 to 45 is an ATP binding site; it reads DGTTT.

The protein belongs to the chaperonin (HSP60) family. As to quaternary structure, forms a cylinder of 14 subunits composed of two heptameric rings stacked back-to-back. Interacts with the co-chaperonin GroES.

It is found in the cytoplasm. The enzyme catalyses ATP + H2O + a folded polypeptide = ADP + phosphate + an unfolded polypeptide.. Together with its co-chaperonin GroES, plays an essential role in assisting protein folding. The GroEL-GroES system forms a nano-cage that allows encapsulation of the non-native substrate proteins and provides a physical environment optimized to promote and accelerate protein folding. The protein is Chaperonin GroEL of Mycobacterium avium.